The chain runs to 95 residues: MSLKQSMENKDIALIDILDVILDKGVAIKGDLIISIAGVDLVYLDLRVLISSVETLVQAKEGNHKPITSEQFDKQKEELMDATGQPSKWTNPLGS.

It belongs to the gas vesicle GvpA family.

The protein resides in the gas vesicle. Functionally, probably a minor component of the gas vesicle. It is not clear what function gas vesicles perform in soil bacteria. Its function is as follows. When a minimal gvp locus (gvpA2-gvpR-gvpN-gvpF-gvpG-gvpL-gvpS-gvpK-gvpJ-gvpT-gvpU, called pNL29) is expressed in E.coli gas vesicles are made. The sequence is that of Gas vesicle protein S from Priestia megaterium (Bacillus megaterium).